Reading from the N-terminus, the 397-residue chain is Citrate synthase (397 aa).

Catalysis depends on residues His-266 and Asp-320.

This sequence belongs to the citrate synthase family.

The enzyme catalyses oxaloacetate + acetyl-CoA + H2O = citrate + CoA + H(+). It functions in the pathway carbohydrate metabolism; tricarboxylic acid cycle; isocitrate from oxaloacetate: step 1/2. The sequence is that of Citrate synthase (gltA) from Synechocystis sp. (strain ATCC 27184 / PCC 6803 / Kazusa).